The chain runs to 1300 residues: Phospholipid-transporting ATPase IK (1300 aa).

The span at 1 to 11 (MGTGPAQTPRS) shows a compositional bias: polar residues. A disordered region spans residues 1-98 (MGTGPAQTPR…SLGQREDLQD (98 aa)). Over 1–149 (MGTGPAQTPR…TAKYNFYSFL (149 aa)) the chain is Cytoplasmic. Basic residues predominate over residues 65–74 (RRHKAQPGRA). A helical membrane pass occupies residues 150-171 (PLNLYEQFHRVSNLFFLIIIIL). Topologically, residues 172 to 177 (QSIPDI) are exoplasmic loop. The chain crosses the membrane as a helical span at residues 178–197 (STLPWFSLSTPMVCLLFIRA). Residues 198-381 (TRDLVDDMGR…TKLDLLMNKL (184 aa)) lie on the Cytoplasmic side of the membrane. A helical membrane pass occupies residues 382-403 (VVVIFISVVLVCLVLAFGFGFS). Residues 404-430 (VKEFKDHHYYLSGVHGSSVAAESFFVF) are Exoplasmic loop-facing. Residues 431–452 (WSFLILLSVTIPMSMFILSEFI) traverse the membrane as a helical segment. Residues 453 to 995 (YLGNSVFIDW…GRWSYVRICK (543 aa)) are Cytoplasmic-facing. D495 serves as the catalytic 4-aspartylphosphate intermediate. ATP contacts are provided by D495, K496, T497, E596, F637, K660, R693, T763, G764, D765, R913, and K919. D495 lines the Mg(2+) pocket. T497 contributes to the Mg(2+) binding site. D939 is a Mg(2+) binding site. The ATP site is built by N942 and D943. D943 contacts Mg(2+). A helical transmembrane segment spans residues 996–1016 (FLRYFFYKSMASMMVQVWFAC). Over 1017–1028 (YNGFTGQPLYEG) the chain is Exoplasmic loop. A helical transmembrane segment spans residues 1029–1048 (WFLALFNLLYSTLPVLYIGL). At 1049-1078 (FEQDVSAEQSLEKPELYVVGQKDELFNYWV) the chain is on the cytoplasmic side. A helical transmembrane segment spans residues 1079 to 1100 (FVQAIAHGVTTSLVNFFMTLWI). At 1101-1112 (SRDTAGPASFSD) the chain is on the exoplasmic loop side. The chain crosses the membrane as a helical span at residues 1113-1135 (HQSFAVVVALSCLLSITMEVILI). The Cytoplasmic portion of the chain corresponds to 1136–1141 (IKYWTA). Residues 1142–1162 (LCVATILLSLGFYAIMTTTTQ) form a helical membrane-spanning segment. At 1163-1182 (SFWLFRVSPTTFPFLYADLS) the chain is on the exoplasmic loop side. The helical transmembrane segment at 1183-1207 (VMSSPSILLVVLLSVSINTFPVLAL) threads the bilayer. The Cytoplasmic portion of the chain corresponds to 1208–1300 (RVIFPALKEL…EAASSPKESQ (93 aa)). A disordered region spans residues 1272 to 1300 (RGPGVSSDIASESLDPSDEEAASSPKESQ).

The protein belongs to the cation transport ATPase (P-type) (TC 3.A.3) family. Type IV subfamily. Requires Mg(2+) as cofactor. As to expression, isoform 3 was only detected in testis.

The protein resides in the cytoplasmic vesicle. It is found in the secretory vesicle. Its subcellular location is the acrosome membrane. The protein localises to the endoplasmic reticulum membrane. The enzyme catalyses ATP + H2O + phospholipidSide 1 = ADP + phosphate + phospholipidSide 2.. It carries out the reaction a 1,2-diacyl-sn-glycero-3-phospho-L-serine(out) + ATP + H2O = a 1,2-diacyl-sn-glycero-3-phospho-L-serine(in) + ADP + phosphate + H(+). P4-ATPase flippase which catalyzes the hydrolysis of ATP coupled to the transport of aminophospholipids from the outer to the inner leaflet of various membranes and ensures the maintenance of asymmetric distribution of phospholipids. Phospholipid translocation also seems to be implicated in vesicle formation and in uptake of lipid signaling molecules. May be responsible for the maintenance of asymmetric distribution of phosphatidylserine (PS) in spermatozoa membranes. Involved in acrosome reactions and binding of spermatozoa to zona pellucida. This chain is Phospholipid-transporting ATPase IK, found in Homo sapiens (Human).